The primary structure comprises 134 residues: ATP synthase epsilon chain (134 aa).

It belongs to the ATPase epsilon chain family. As to quaternary structure, F-type ATPases have 2 components, CF(1) - the catalytic core - and CF(0) - the membrane proton channel. CF(1) has five subunits: alpha(3), beta(3), gamma(1), delta(1), epsilon(1). CF(0) has three main subunits: a, b and c.

Its subcellular location is the cell inner membrane. Functionally, produces ATP from ADP in the presence of a proton gradient across the membrane. This is ATP synthase epsilon chain from Sinorhizobium fredii (strain NBRC 101917 / NGR234).